A 295-amino-acid polypeptide reads, in one-letter code: 4-hydroxy-tetrahydrodipicolinate synthase (295 aa).

Threonine 47 is a pyruvate binding site. Tyrosine 135 serves as the catalytic Proton donor/acceptor. Catalysis depends on lysine 163, which acts as the Schiff-base intermediate with substrate. Isoleucine 206 is a pyruvate binding site.

This sequence belongs to the DapA family. As to quaternary structure, homodimer.

The protein localises to the cytoplasm. The catalysed reaction is L-aspartate 4-semialdehyde + pyruvate = (2S,4S)-4-hydroxy-2,3,4,5-tetrahydrodipicolinate + H2O + H(+). It functions in the pathway amino-acid biosynthesis; L-lysine biosynthesis via DAP pathway; (S)-tetrahydrodipicolinate from L-aspartate: step 3/4. Catalyzes the condensation of (S)-aspartate-beta-semialdehyde [(S)-ASA] and pyruvate to 4-hydroxy-tetrahydrodipicolinate (HTPA). The polypeptide is 4-hydroxy-tetrahydrodipicolinate synthase (Staphylococcus aureus (strain MSSA476)).